Here is a 297-residue protein sequence, read N- to C-terminus: MTEITETAEAQAALLSAALPYMQRYENKTVVIKYGGHAMGDIALGRAFARDVALLKQSGVNPIVVHGGGPQIGDMLKRMGIESKFEGGLRVTDQKTVEIVEMVLAGSINKEIVALINAEGEWAIGLCGKDGNMVFAEKARKTVVDPDSNIERVLDLGFVGEPVEVDRTLLDLLARSEMIPVLAPVAPGRDGYTYNINADTFAGAIAGAVKASRLLFLTDVPGVLDRDKKLINELTVSQARALIKDGTISGGMIPKVETCIEAIQRGVEGVVILNGKTAHSVLLELFTEHGAGTLIVP.

Residues glycine 68 to glycine 69, arginine 90, and asparagine 195 contribute to the substrate site.

This sequence belongs to the acetylglutamate kinase family. ArgB subfamily.

It localises to the cytoplasm. It carries out the reaction N-acetyl-L-glutamate + ATP = N-acetyl-L-glutamyl 5-phosphate + ADP. Its pathway is amino-acid biosynthesis; L-arginine biosynthesis; N(2)-acetyl-L-ornithine from L-glutamate: step 2/4. Its function is as follows. Catalyzes the ATP-dependent phosphorylation of N-acetyl-L-glutamate. The sequence is that of Acetylglutamate kinase from Chelativorans sp. (strain BNC1).